A 241-amino-acid polypeptide reads, in one-letter code: Chloride intracellular channel protein 1 (241 aa).

Alanine 2 is subject to N-acetylalanine. Residues 2–90 are required for insertion into the membrane; it reads AEEQPQVELF…EEFLEAVLCP (89 aa). Lysine 13 is modified (N6-acetyllysine). A glutathione-binding site is contributed by cysteine 24. Cysteine 24 carries the S-glutathionyl cysteine; alternate modification. The G-site signature appears at 24–27; it reads CPFS. An intrachain disulfide couples cysteine 24 to cysteine 59. A helical transmembrane segment spans residues 26–46; the sequence is FSQRLFMVLWLKGVTFNVTTV. 2 residues coordinate glutathione: leucine 64 and threonine 77. Residues 93–233 enclose the GST C-terminal domain; the sequence is YPKLAALNPE…PDDEEIELAY (141 aa). Position 119 is an N6-acetyllysine (lysine 119). Position 121 is a phosphoserine (serine 121). At lysine 131 the chain carries N6-acetyllysine. Phosphoserine occurs at positions 156 and 211. Tyrosine 233 carries the post-translational modification Phosphotyrosine.

This sequence belongs to the chloride channel CLIC family. As to quaternary structure, monomer. Homodimer (in vitro). Interacts with TRAPPC2. Dimerization requires a conformation change that leads to the exposure of a large hydrophobic surface. In vivo, this may lead to membrane insertion. Interacts with AKAP9. In terms of processing, hydrogen peroxide treatment causes a conformation change, leading to dimerization and formation of an intramolecular disulfide bond between Cys-24 and Cys-59. In terms of tissue distribution, expression is prominent in heart, placenta, liver, kidney and pancreas.

It is found in the nucleus. It localises to the nucleus membrane. Its subcellular location is the cytoplasm. The protein resides in the cell membrane. The protein localises to the endoplasmic reticulum. It carries out the reaction L-dehydroascorbate + 2 glutathione = glutathione disulfide + L-ascorbate. The catalysed reaction is chloride(in) = chloride(out). It catalyses the reaction iodide(out) = iodide(in). The enzyme catalyses thiocyanate(in) = thiocyanate(out). It carries out the reaction nitrate(in) = nitrate(out). The catalysed reaction is bromide(in) = bromide(out). It catalyses the reaction fluoride(in) = fluoride(out). With respect to regulation, the oxidoreductase activity is inhibited by rapamycin, amphotericin B and IAA-94. The channel conductance is regulated by pH and redox membrane potential. Inhibited by IAA-94. In terms of biological role, in the soluble state, catalyzes glutaredoxin-like thiol disulfide exchange reactions with reduced glutathione as electron donor. Reduces selenite and dehydroascorbate and may act as an antioxidant during oxidative stress response. Can insert into membranes and form voltage-dependent multi-ion conductive channels. Membrane insertion seems to be redox-regulated and may occur only under oxidizing conditions. Involved in regulation of the cell cycle. The polypeptide is Chloride intracellular channel protein 1 (Homo sapiens (Human)).